A 179-amino-acid polypeptide reads, in one-letter code: Transcription termination/antitermination protein NusG (179 aa).

A KOW domain is found at 130–157 (EGDVVQIIDGAFMGQEGRVVEIENNKVK).

The protein belongs to the NusG family.

Participates in transcription elongation, termination and antitermination. This Streptococcus pyogenes serotype M1 protein is Transcription termination/antitermination protein NusG.